The sequence spans 234 residues: Small ribosomal subunit protein uS3 (234 aa).

The KH type-2 domain maps to 39-107 (VRDYLKKKLS…PVHVNIEEVR (69 aa)). The interval 212–234 (EQPAAAEQEKRGKKSGVKHAAAS) is disordered.

The protein belongs to the universal ribosomal protein uS3 family. Part of the 30S ribosomal subunit. Forms a tight complex with proteins S10 and S14.

Its function is as follows. Binds the lower part of the 30S subunit head. Binds mRNA in the 70S ribosome, positioning it for translation. In Thiobacillus denitrificans (strain ATCC 25259 / T1), this protein is Small ribosomal subunit protein uS3.